We begin with the raw amino-acid sequence, 397 residues long: LIM/homeobox protein Lhx3 (397 aa).

LIM zinc-binding domains are found at residues 31–81 (CAGC…CKDD) and 90–144 (CAAC…CKAD). T63 bears the Phosphothreonine mark. Phosphoserine is present on S71. Positions 157 to 216 (AKRPRTTITAKQLETLKSAYNTSPKPARHVREQLSSETGLDMRVVQVWFQNRRAKEKRLK) form a DNA-binding region, homeobox. The disordered stretch occupies residues 212–397 (EKRLKKDAGR…WLDEVDHAQF (186 aa)). Position 227 is a phosphotyrosine (Y227). A phosphoserine mark is found at S234 and S238. Positions 316–331 (GVPPSPAAPQSLPGPQ) are enriched in pro residues.

In terms of assembly, interacts with POU1F1. At neuronal promoters, interacts with LDB1, in motor neurons LDB1 is displaced by ISL1 and a ternary complex is formed in which ISL1 contacts both LHX3 and LDB1; allosteric structural changes in the DNA binding domain of LHX3, induced by the ISL1-LHX3 interaction, may explain differences in sequence specificity of the different complexes. Interacts with LDB2. May interact with CITED2/MRG1.

It is found in the nucleus. Its function is as follows. Transcription factor. Recognizes and binds to the consensus sequence motif 5'-AATTAATTA-3' in the regulatory elements of target genes, such as glycoprotein hormones alpha chain CGA and visual system homeobox CHX10, positively modulating transcription; transcription can be co-activated by LDB2. Synergistically enhances transcription from the prolactin promoter in cooperation with POU1F1/Pit-1. Required for the establishment of the specialized cells of the pituitary gland and the nervous system. Involved in the development of interneurons and motor neurons in cooperation with LDB1 and ISL1. This Homo sapiens (Human) protein is LIM/homeobox protein Lhx3 (LHX3).